We begin with the raw amino-acid sequence, 246 residues long: UDP-N-acetyl-D-mannosaminuronic acid transferase (246 aa).

Belongs to the glycosyltransferase 26 family.

The catalysed reaction is UDP-N-acetyl-alpha-D-mannosaminouronate + N-acetyl-alpha-D-glucosaminyl-di-trans,octa-cis-undecaprenyl diphosphate = beta-D-ManNAcA-(1-&gt;4)-alpha-D-GlcNAc-di-trans,octa-cis-undecaprenyl diphosphate + UDP + H(+). It participates in bacterial outer membrane biogenesis; enterobacterial common antigen biosynthesis. In terms of biological role, catalyzes the synthesis of Und-PP-GlcNAc-ManNAcA (Lipid II), the second lipid-linked intermediate involved in enterobacterial common antigen (ECA) synthesis. The chain is UDP-N-acetyl-D-mannosaminuronic acid transferase from Yersinia pseudotuberculosis serotype IB (strain PB1/+).